Consider the following 198-residue polypeptide: dITP/XTP pyrophosphatase (198 aa).

Substrate is bound at residue 9–14 (SNNAKK). Mg(2+) contacts are provided by D41 and D70. D70 functions as the Proton acceptor in the catalytic mechanism. Residues S71, 153 to 156 (FGYD), K176, and 181 to 182 (HR) each bind substrate.

Belongs to the HAM1 NTPase family. Homodimer. Requires Mg(2+) as cofactor.

The catalysed reaction is XTP + H2O = XMP + diphosphate + H(+). It carries out the reaction dITP + H2O = dIMP + diphosphate + H(+). It catalyses the reaction ITP + H2O = IMP + diphosphate + H(+). Pyrophosphatase that catalyzes the hydrolysis of nucleoside triphosphates to their monophosphate derivatives, with a high preference for the non-canonical purine nucleotides XTP (xanthosine triphosphate), dITP (deoxyinosine triphosphate) and ITP. Seems to function as a house-cleaning enzyme that removes non-canonical purine nucleotides from the nucleotide pool, thus preventing their incorporation into DNA/RNA and avoiding chromosomal lesions. The sequence is that of dITP/XTP pyrophosphatase from Aromatoleum aromaticum (strain DSM 19018 / LMG 30748 / EbN1) (Azoarcus sp. (strain EbN1)).